We begin with the raw amino-acid sequence, 878 residues long: Alanine--tRNA ligase (878 aa).

Residues His-567, His-571, Cys-669, and His-673 each contribute to the Zn(2+) site.

This sequence belongs to the class-II aminoacyl-tRNA synthetase family. Requires Zn(2+) as cofactor.

Its subcellular location is the cytoplasm. The enzyme catalyses tRNA(Ala) + L-alanine + ATP = L-alanyl-tRNA(Ala) + AMP + diphosphate. Its function is as follows. Catalyzes the attachment of alanine to tRNA(Ala) in a two-step reaction: alanine is first activated by ATP to form Ala-AMP and then transferred to the acceptor end of tRNA(Ala). Also edits incorrectly charged Ser-tRNA(Ala) and Gly-tRNA(Ala) via its editing domain. This is Alanine--tRNA ligase from Rickettsia conorii (strain ATCC VR-613 / Malish 7).